The following is a 712-amino-acid chain: Frizzled-6 (712 aa).

An N-terminal signal peptide occupies residues 1–18 (MEMFTFLLTCVFLPFVRG). Residues 19 to 132 (HSLFTCEPIT…CDRLQYCDET (114 aa)) form the FZ domain. The Extracellular segment spans residues 19 to 201 (HSLFTCEPIT…SDELEFAKSF (183 aa)). 5 cysteine pairs are disulfide-bonded: Cys24/Cys85, Cys32/Cys78, Cys69/Cys106, Cys95/Cys129, and Cys99/Cys123. Asn38 carries N-linked (GlcNAc...) asparagine glycosylation. Residues 202 to 222 (IGIVSIFCLCATLFTFLTFLI) form a helical membrane-spanning segment. At 223–233 (DVKRFRYPERP) the chain is on the cytoplasmic side. The chain crosses the membrane as a helical span at residues 234-254 (IIYYSVCYSIVSLMYFIGFLL). Residues 255–284 (GDRTACNKADEKLELGDTVVLGSQNKACTV) are Extracellular-facing. The chain crosses the membrane as a helical span at residues 285–305 (LFMFLYFFTMAGTVWWVILTI). Topologically, residues 306 to 324 (TWFLAAGRKWSCEAIEQKA) are cytoplasmic. Residues 325–345 (VWFHAVAWGIPGFLTVMLLAM) form a helical membrane-spanning segment. Topologically, residues 346–370 (NKVEGDNISGVCFVGLYDLDASRYF) are extracellular. An N-linked (GlcNAc...) asparagine glycan is attached at Asn352. The chain crosses the membrane as a helical span at residues 371–391 (VLLPLCLCVFVGLSLLLAGII). Over 392–416 (SLNHVRQVIQHDGRNQEKLKKFMIR) the chain is Cytoplasmic. Residues 417–437 (IGVFSGLYLVPLVTLLGCYVY) form a helical membrane-spanning segment. Residues 438–473 (EQVNRITWEITWVSDHCRQYHIPCPYQAKTETRPEL) lie on the Extracellular side of the membrane. The helical transmembrane segment at 474–494 (ALFMIKYLMTLIVGISAVFWV) threads the bilayer. The Cytoplasmic portion of the chain corresponds to 495–712 (GSKKTCTEWA…EHGTGSHSDT (218 aa)). The Lys-Thr-X-X-X-Trp motif, mediates interaction with the PDZ domain of Dvl family members motif lies at 498 to 503 (KTCTEW). The interval 588-712 (EIQTSPETSV…EHGTGSHSDT (125 aa)) is disordered. 2 stretches are compositionally biased toward basic and acidic residues: residues 628–637 (LCEEQADRKG) and 652–664 (TRSEGRVTPKSDV). Polar residues predominate over residues 668-693 (GPMQSSSLQVPGSSEPGSLKGSTSLL). A compositionally biased stretch (basic and acidic residues) spans 700–712 (GRKEHGTGSHSDT).

Belongs to the G-protein coupled receptor Fz/Smo family. In terms of assembly, interacts with LMBR1L. In terms of processing, ubiquitinated by ZNRF3, leading to its degradation by the proteasome.

It is found in the membrane. Its subcellular location is the cell membrane. The protein localises to the cell surface. The protein resides in the apical cell membrane. It localises to the cytoplasmic vesicle membrane. It is found in the endoplasmic reticulum membrane. Functionally, receptor for Wnt proteins. Most of frizzled receptors are coupled to the beta-catenin canonical signaling pathway, which leads to the activation of disheveled proteins, inhibition of GSK-3 kinase, nuclear accumulation of beta-catenin and activation of Wnt target genes. A second signaling pathway involving PKC and calcium fluxes has been seen for some family members, but it is not yet clear if it represents a distinct pathway or if it can be integrated in the canonical pathway, as PKC seems to be required for Wnt-mediated inactivation of GSK-3 kinase. Both pathways seem to involve interactions with G-proteins. Activation by Wnt5A stimulates PKC activity via a G-protein-dependent mechanism. Involved in transduction and intercellular transmission of polarity information during tissue morphogenesis and/or in differentiated tissues. Together with FZD3, is involved in the neural tube closure and plays a role in the regulation of the establishment of planar cell polarity (PCP), particularly in the orientation of asymmetric bundles of stereocilia on the apical faces of a subset of auditory and vestibular sensory cells located in the inner ear. The polypeptide is Frizzled-6 (FZD6) (Canis lupus familiaris (Dog)).